The sequence spans 2603 residues: Ankyrin repeat domain-containing protein 17 (2603 aa).

At Met-1 the chain carries N-acetylmethionine. Over residues 1–32 (MEKATVPAAAEGEGSPPAAAAVAAPPAAAAAE) the composition is skewed to low complexity. The tract at residues 1–127 (MEKATVPAAA…DDDEEEEVSE (127 aa)) is disordered. Phosphoserine is present on residues Ser-15 and Ser-42. The segment covering 68–77 (PHHKAKRNRT) has biased composition (basic residues). A compositionally biased stretch (low complexity) spans 82-92 (SSSESSSDSDN). A compositionally biased stretch (gly residues) spans 93 to 107 (SGGGGGGGGGGGGGT). The span at 112 to 127 (SEEEEDDDDEEEEVSE) shows a compositional bias: acidic residues. Ser-152 carries the post-translational modification Phosphoserine. 15 ANK repeats span residues 229–258 (SDNRSLAEACSEGDVNAVRKLLIEGRSVNE), 262–291 (EGESLLCLACSAGYYELAQVLLAMHANVED), 296–325 (GDITPLMAAANGGHVKIVKLLLAHKADVNA), 329–358 (TGNTALTYACAGGYVDVVKVLLESGASIED), 362–391 (NGHTPLMEAGSAGHVEVARLLLENGAGINT), 396–425 (FKESALTLACYKGHLEMVRFLLEAGADQEH), 429–458 (EMHTALMEACMDGHVEVARLLLDSGAQVNM), 462–491 (SFESPLTLAACGGHVELAALLIERGASLEE), 495–524 (EGYTPLMEAAREGHEEMVALLLGQGANINA), 529–558 (TQETALTLACCGGFLEVADFLIKAGADIEL), 559–588 (GCSTPLMEAAQEGHLELVKYLLAAGANVHA), 592–621 (TGDTALTYACENGHTDVADVLLQAGADLEH), 625–654 (GGRTPLMKAARAGHVCTVQFLISKGANVNR), 659–688 (NDHTVLSLACAGGHLAVVELLLAHGADPTH), and 692–721 (DGSTMLIEAAKGGHTSVVCYLLDYPNNLLA). A Glycyl lysine isopeptide (Lys-Gly) (interchain with G-Cter in SUMO2) cross-link involves residue Lys-314. The tract at residues 770–792 (VRSKAASKQKSNSHLPANSQDVQ) is disordered. Residues 775-792 (ASKQKSNSHLPANSQDVQ) are compositionally biased toward polar residues. At Ser-799 the chain carries Phosphoserine. ANK repeat units follow at residues 1078–1107 (NHDTALTLACAGGHEELVQTLLERGASIEH), 1111–1140 (KGFTPLILAATAGHVGVVEILLDNGADIEA), 1145–1174 (TKDTPLSLACSGGRQEVVELLLARGANKEH), 1178–1207 (SDYTPLSLAASGGYVNIIKILLNAGAEINS), 1213–1242 (LGISPLMLAAMNGHTAAVKLLLDMGSDINA), 1247–1276 (NRNTALTLACFQGRTEVVSLLLDRKANVEH), 1280–1309 (TGLTPLMEAASGGYAEVGRVLLDKGADVNA), 1315–1344 (SRDTALTIAADKGHYKFCELLIGKGAHIDV), 1348–1377 (KGNTPLWLAANGGHLDVVQLLVQATADVDA), and 1381–1410 (RKITPLMAAFRKGHVKVVRYLVKEVNQFPS). Positions 1438-1522 (VQAKDRQAAE…EKEKLKVEEE (85 aa)) form a coiled coil. Ser-1453 carries the phosphoserine modification. 2 disordered regions span residues 1475-1496 (AKREKRKEKRRKKKEEQRRKLE) and 1513-1713 (EKEK…PKRE). The span at 1477–1487 (REKRKEKRRKK) shows a compositional bias: basic residues. Composition is skewed to low complexity over residues 1526-1546 (LTEPPSATTTTTIGISATWTT), 1598-1607 (ESKSSSTSES), and 1616-1636 (SSCSDESSNSNSSRKSNNHAS). A Phosphoserine modification is found at Ser-1631. Polar residues-rich tracts occupy residues 1638 to 1648 (VVTTTMASKKQ) and 1671 to 1699 (LSETVNEGTSNSLSTCTKSGPSPLSSPNG). A phosphoserine mark is found at Ser-1692, Ser-1696, and Ser-1705. Residues 1721-1785 (RRSKKVSVPS…ESTRQATQLI (65 aa)) enclose the KH domain. Arg-1870 is modified (asymmetric dimethylarginine). Disordered stretches follow at residues 1902–1991 (PRLP…PSVR), 2007–2195 (TTVT…SSSA), and 2269–2327 (VSSQ…YGSV). Low complexity-rich tracts occupy residues 1946–1989 (SNQN…SSPS) and 2007–2024 (TTVTTTASNNSTAPTNAT). Phosphoserine occurs at positions 2038, 2040, 2041, 2043, 2055, and 2063. 3 stretches are compositionally biased toward low complexity: residues 2068–2077 (ASASEQEASS), 2087–2108 (RPPHSSSSSGSSSGHSTQQQPP), and 2175–2189 (PPSHATAAPHKTPAP). The segment covering 2269 to 2298 (VSSQSTPESMLSGKSSYLPNSDPLHQSDTS) has biased composition (polar residues). Positions 2303-2313 (FRPPLQRPAPS) are enriched in pro residues. Position 2373 is a phosphoserine (Ser-2373). Positions 2378-2447 (LTPCSSASNE…TGTSAPSVIG (70 aa)) are disordered. Residues 2379 to 2391 (TPCSSASNESPAQ) are compositionally biased toward polar residues. Positions 2392–2411 (SVSSGVRAPSPAPSSVPLGS) are enriched in low complexity. The residue at position 2401 (Ser-2401) is a Phosphoserine. The segment covering 2435-2447 (IRQTGTSAPSVIG) has biased composition (polar residues).

As to quaternary structure, interacts (via N-terminus) with NOD2. Interacts with CDK2, MCM3, MCM5, MCM7, CDC6 and PCNA. Interacts with MAVS and IFIH1. Interacts (via the second ankyrin repeat cluster) with RIGI. Post-translationally, phosphorylated by CDK2. As to expression, highly expressed in fetal liver. Detected in adult liver cells, ovarian oocytes, seminiferous tubules of the testes and pelvic region of the kidney. It was not detected in heart, gut, lung, spleen and skeletal muscle. Earliest specific in situ marker of hepatic differentiation during embryogenesis, useful for characterization of inductive events involved in hepatic specification.

Its subcellular location is the cytoplasm. It localises to the nucleus. Functionally, could play pivotal roles in cell cycle and DNA regulation. Involved in innate immune defense against viruse by positively regulating the viral dsRNA receptors RIGI and IFIH1 signaling pathways. Involves in NOD2- and NOD1-mediated responses to bacteria suggesting a role in innate antibacterial immune pathways too. Could play a central role for the formation and/or maintenance of the blood vessels of the circulation system. The chain is Ankyrin repeat domain-containing protein 17 (Ankrd17) from Mus musculus (Mouse).